The chain runs to 76 residues: Large ribosomal subunit protein bL31 (76 aa).

The protein belongs to the bacterial ribosomal protein bL31 family. Type A subfamily. As to quaternary structure, part of the 50S ribosomal subunit.

Its function is as follows. Binds the 23S rRNA. This chain is Large ribosomal subunit protein bL31, found in Picosynechococcus sp. (strain ATCC 27264 / PCC 7002 / PR-6) (Agmenellum quadruplicatum).